The primary structure comprises 196 residues: Protein TEX261 (196 aa).

The next 5 membrane-spanning stretches (helical) occupy residues 3 to 23 (FMYV…TLAV), 42 to 62 (SRII…LYVF), 70 to 90 (IGVG…FPFI), 97 to 117 (FILS…FFAE), and 125 to 145 (VLAY…VSLS).

Belongs to the SVP26 family. In terms of tissue distribution, detected in testis.

It is found in the membrane. This chain is Protein TEX261 (Tex261), found in Mus musculus (Mouse).